Here is a 226-residue protein sequence, read N- to C-terminus: Cytidylate kinase (226 aa).

Position 10 to 18 (10 to 18 (GPASSGKST)) interacts with ATP.

It belongs to the cytidylate kinase family. Type 1 subfamily.

The protein resides in the cytoplasm. The enzyme catalyses CMP + ATP = CDP + ADP. It carries out the reaction dCMP + ATP = dCDP + ADP. This is Cytidylate kinase from Streptococcus pyogenes serotype M28 (strain MGAS6180).